The chain runs to 712 residues: Diacylglycerol kinase 2 (712 aa).

2 consecutive Phorbol-ester/DAG-type zinc fingers follow at residues 72–133 (HHQW…AKDC) and 145–208 (RHHW…GDAC). Positions 338 to 479 (PDARPLLVFI…RWSVKIVEES (142 aa)) constitute a DAGKc domain.

It belongs to the eukaryotic diacylglycerol kinase family. As to quaternary structure, monomer. In terms of tissue distribution, expressed in rosette and cauline leaves, flowers, siliques and roots. Highly expressed in young leaves and at lower levels in older leaves. In young seedlings, expressed at the root-shoot junction zone and vascular bundles of the cotyledons. In older plants, expressed in root tip, central cylinder, root hair, leaf mesophyll cells and guard cells, sepals, filaments of the anthers, stigma, valves of young and early adult siliques and hilum of seeds.

Its subcellular location is the endoplasmic reticulum. The enzyme catalyses a 1,2-diacyl-sn-glycerol + ATP = a 1,2-diacyl-sn-glycero-3-phosphate + ADP + H(+). It catalyses the reaction 1-octadecanoyl-2-(5Z,8Z,11Z,14Z-eicosatetraenoyl)-sn-glycerol + ATP = 1-octadecanoyl-2-(5Z,8Z,11Z,14Z-eicosatetraenoyl)-sn-glycero-3-phosphate + ADP + H(+). The catalysed reaction is 1,2-di-(9Z-octadecenoyl)-sn-glycerol + ATP = 1,2-di-(9Z-octadecenoyl)-sn-glycero-3-phosphate + ADP + H(+). Its function is as follows. Phosphorylates the second messenger diacylglycerol (DAG) to generate phosphatidic acid (PA), another important signaling molecule. PA is required for plant development and responses to abiotic stress and pathogen attack. May be involved in the accumulation of PA during cold stress. Involved in response to freezing stress by modulating the accumulation of PA. Exhibits high specificity for the unsaturated DAG analogs 1-stearoyl-2-arachidonoyl-sn-glycerol (1,2-SAG) and 1,2-dioleoyl-sn-glycerol (1,2-DOG). Exhibits high specificity for 1-palmitoyl, 2-oleoyl-sn-glycerol (1,2 POG), 1-stearoyl, 2-linoleoyl-sn-glycerol (1,2-SLG) and 1-oleoyl, 2-palmitoyl-sn-glycerol (1,2-OPG). Has almost no activity toward 1,2-dioctanoyl-sn-glycerol (1,2-DOCG), 1,2-dipalmitoyl-sn-glycerol (1,2-DPG), 1,2-dimyristoyl-sn-glycerol (1,2-DMG) and 1-oleoyl-2-acetyl-sn-glycerol (1,2-OAG). Functions together with DGK4 in male gametophyte development and biosynthesis of phosphatidylglycerol and phosphatidylinositol in the endoplasmic reticulum (ER). Involved in PA production for pollen grain growth, as well as leaf and root growth. In Arabidopsis thaliana (Mouse-ear cress), this protein is Diacylglycerol kinase 2.